The sequence spans 127 residues: Fumarate reductase subunit C (127 aa).

The next 3 helical transmembrane spans lie at 30 to 50 (ATVLPLILFTLFLTFGLGCLV), 58 to 78 (GWLAFMANPIVVAINIVALLG), and 107 to 127 (IIVLTQWAAVAFISLIVLIVV).

The protein belongs to the FrdC family. As to quaternary structure, part of an enzyme complex containing four subunits: a flavoprotein (FrdA), an iron-sulfur protein (FrdB), and two hydrophobic anchor proteins (FrdC and FrdD).

It localises to the cell inner membrane. Its function is as follows. Anchors the catalytic components of the fumarate reductase complex to the cell membrane, binds quinones. This is Fumarate reductase subunit C from Vibrio parahaemolyticus serotype O3:K6 (strain RIMD 2210633).